A 129-amino-acid polypeptide reads, in one-letter code: MKKQGILNSHLAKIFADLGHTDRVVIADCGLPIPDGVKRVDLSLRIGEPSFLEVLDVVESDLVVERITIAEEILTHNSTIADSLKERYTSIDMCSHEDFKREVAKAKVVIRTGEATPYANVILHAGVIF.

The Proton donor role is filled by histidine 20. Substrate-binding positions include aspartate 28, histidine 96, and 118 to 120 (YAN).

Belongs to the RbsD / FucU family. RbsD subfamily. Homodecamer.

Its subcellular location is the cytoplasm. It carries out the reaction beta-D-ribopyranose = beta-D-ribofuranose. The protein operates within carbohydrate metabolism; D-ribose degradation; D-ribose 5-phosphate from beta-D-ribopyranose: step 1/2. Functionally, catalyzes the interconversion of beta-pyran and beta-furan forms of D-ribose. This Exiguobacterium sp. (strain ATCC BAA-1283 / AT1b) protein is D-ribose pyranase.